Reading from the N-terminus, the 116-residue chain is DNA polymerase epsilon subunit 4 (116 aa).

Residues 1–10 are compositionally biased toward low complexity; that stretch reads MAAAAPGSGA. Positions 1–36 are disordered; the sequence is MAAAAPGSGAAREEEGTGGDAATPQPPAPTSAPGAR.

As to quaternary structure, component of the DNA polymerase epsilon complex consisting of four subunits: the catalytic subunit POLE and the accessory subunits POLE2, POLE3 and POLE4. Interaction with POLE3 is a prerequisite for further binding with POLE and POLE2.

The protein localises to the nucleus. Accessory component of the DNA polymerase epsilon complex. Participates in DNA repair and in chromosomal DNA replication. The chain is DNA polymerase epsilon subunit 4 (POLE4) from Bos taurus (Bovine).